The sequence spans 262 residues: Hydroxyethylthiazole kinase (262 aa).

Residue Met-44 coordinates substrate. Residues Arg-118 and Ser-166 each contribute to the ATP site. Gly-193 contacts substrate.

This sequence belongs to the Thz kinase family. The cofactor is Mg(2+).

The enzyme catalyses 5-(2-hydroxyethyl)-4-methylthiazole + ATP = 4-methyl-5-(2-phosphooxyethyl)-thiazole + ADP + H(+). It participates in cofactor biosynthesis; thiamine diphosphate biosynthesis; 4-methyl-5-(2-phosphoethyl)-thiazole from 5-(2-hydroxyethyl)-4-methylthiazole: step 1/1. Its function is as follows. Catalyzes the phosphorylation of the hydroxyl group of 4-methyl-5-beta-hydroxyethylthiazole (THZ). This Chlamydia abortus (strain DSM 27085 / S26/3) (Chlamydophila abortus) protein is Hydroxyethylthiazole kinase.